Consider the following 1305-residue polypeptide: Contactin-associated protein-like 5 (1305 aa).

A signal peptide spans 1 to 24 (MDSVPRLTGVFTLLLSGLWHLGSS). Residues 25–1236 (ATNYNCDDPL…PLTNAVRSDS (1212 aa)) are Extracellular-facing. The F5/8 type C domain occupies 30-174 (CDDPLASLLS…IGMRVEVYGC (145 aa)). Cysteine 30 and cysteine 174 are joined by a disulfide. Laminin G-like domains lie at 180 to 360 (VADF…TFSC) and 367 to 544 (PITF…IDLC). N-linked (GlcNAc...) asparagine glycans are attached at residues asparagine 282, asparagine 355, and asparagine 496. Cysteine 329 and cysteine 360 are joined by a disulfide. 4 cysteine pairs are disulfide-bonded: cysteine 512-cysteine 544, cysteine 550-cysteine 561, cysteine 555-cysteine 570, and cysteine 572-cysteine 582. The EGF-like 1 domain maps to 546–583 (IKDRCLPNYCEHGGFCSQSWTTFYCNCSNTGYTGATCH). The Fibrinogen C-terminal domain occupies 584–790 (NSLYEQSCEV…LRCYGDRHFW (207 aa)). Asparagine 622 is a glycosylation site (N-linked (GlcNAc...) asparagine). One can recognise a Laminin G-like 3 domain in the interval 791–956 (NAVSFYTEAS…KVTSGVRPGC (166 aa)). 5 disulfide bridges follow: cysteine 929-cysteine 956, cysteine 960-cysteine 973, cysteine 967-cysteine 982, cysteine 984-cysteine 994, and cysteine 1163-cysteine 1198. Residues 957-995 (PGHCSTYGSICHNGGKCVEKYSGYFCDCTNSPYEGPFCK) enclose the EGF-like 2 domain. In terms of domain architecture, Laminin G-like 4 spans 1000 to 1198 (AVFEAGTSVT…VQGTLMESSC (199 aa)). Residues 1237 to 1257 (AVIGGVIAVVIFIIFSIIGIM) form a helical membrane-spanning segment. Topologically, residues 1258 to 1305 (TRFLYQHKQSHRTNQMKEKEYPENLDSSFRNDIDLQNTVSECKREYFI) are cytoplasmic.

The protein belongs to the neurexin family.

The protein localises to the membrane. Its function is as follows. May play a role in the correct development and proper functioning of the peripheral and central nervous system and be involved in cell adhesion and intercellular communication. The chain is Contactin-associated protein-like 5 (CNTNAP5) from Canis lupus familiaris (Dog).